A 342-amino-acid chain; its full sequence is Cathepsin B-like cysteine proteinase 1 (342 aa).

The signal sequence occupies residues 1 to 18 (MKYLVLALCTYLCSQTGA). A propeptide spans 19–86 (DENAAQGIPL…VKEDPDPEVD (68 aa)) (activation peptide). An N-linked (GlcNAc...) asparagine glycan is attached at Asn99. 6 disulfides stabilise this stretch: Cys100–Cys128, Cys111–Cys156, Cys147–Cys214, Cys148–Cys152, Cys185–Cys218, and Cys193–Cys205. Residue Cys114 is part of the active site. Residue Asn138 is glycosylated (N-linked (GlcNAc...) asparagine). Asn198 carries an N-linked (GlcNAc...) asparagine glycan. The active site involves His285. Asn296 carries an N-linked (GlcNAc...) asparagine glycan. Residue Asn305 is part of the active site.

This sequence belongs to the peptidase C1 family.

Its function is as follows. Expression of the protease correlates with blood-feeding and suggests a role for the protease in blood digestion. The chain is Cathepsin B-like cysteine proteinase 1 (AC-1) from Haemonchus contortus (Barber pole worm).